The following is a 98-amino-acid chain: MASFEEKIAAAEKRAQEAAKQVKQLKAKRDMVEARKLQSLLKGQRSDDTRRKILVGALVLDMMERDESTRQRFMDRLDKYLTRADDRALFQLPIPEEK.

This protein is essential to promote the specific transfer of the plasmid in the presence of conjugative plasmids. This chain is Mobilization protein MobS (mobS), found in Acidithiobacillus ferridurans.